The primary structure comprises 426 residues: Putative F-box protein At4g38870 (426 aa).

The F-box domain occupies Ser47–Leu92.

The chain is Putative F-box protein At4g38870 from Arabidopsis thaliana (Mouse-ear cress).